The primary structure comprises 482 residues: Lipoamide acyltransferase component of branched-chain alpha-keto acid dehydrogenase complex, mitochondrial (482 aa).

The N-terminal 61 residues, 1–61 (MAAVRMLRTW…HFLKTTAALR (61 aa)), are a transit peptide targeting the mitochondrion. A Lipoyl-binding domain is found at 64-139 (VVQFKLSDIG…YVGKPLVDIE (76 aa)). Position 105 is an N6-lipoyllysine (lysine 105). At lysine 133 the chain carries N6-succinyllysine. Residues 145 to 160 (DSEEDVVETPAVSHDE) form a critical for association with PPM1K region. The interval 147 to 168 (EEDVVETPAVSHDEHTHQEIKG) is disordered. Basic and acidic residues predominate over residues 157–168 (SHDEHTHQEIKG). The 38-residue stretch at 172-209 (LATPAVRRLAMENNIKLSEVVGSGKDGRILKEDILNYL) folds into the Peripheral subunit-binding (PSBD) domain. Position 196 is an N6-acetyllysine; alternate (lysine 196). Lysine 196 bears the N6-succinyllysine; alternate mark. An N6-acetyllysine modification is found at lysine 202. Position 220 is a phosphoserine (serine 220). Lysine 243 and lysine 250 each carry N6-acetyllysine. Lysine 261 carries the N6-succinyllysine modification. Lysine 289 carries the post-translational modification N6-acetyllysine; alternate. N6-succinyllysine; alternate is present on lysine 289. Residue arginine 291 participates in CoA binding. N6-acetyllysine occurs at positions 295 and 304. Residues serine 306, aspartate 349, glutamine 378, serine 399, asparagine 400, serine 403, glycine 424, and isoleucine 426 each coordinate CoA. Lysine 435 is modified (N6-acetyllysine). Lysine 440 carries the post-translational modification N6-acetyllysine; alternate. Residue lysine 440 is modified to N6-succinyllysine; alternate. Active-site residues include histidine 452 and aspartate 456.

Belongs to the 2-oxoacid dehydrogenase family. As to quaternary structure, forms a 24-polypeptide structural core with octahedral symmetry that represents the E2 component of the branched-chain alpha-ketoacid dehydrogenase (BCKDH) complex. The BCKDH complex is composed of three major building blocks E1, E2 and E3. It is organized around E2, a 24-meric cubic core composed of DBT, to which are associated 6 to 12 copies of E1, and approximately 6 copies of the dehydrogenase E3, a DLD dimer. Interacts with PPM1K with a 24:1 stoichiometry; the N-terminal region (residues 49-61) of PPM1K and C-terminal linker of the lipoyl domain of DBT/E2 (residues 145-160) are critical for this interaction whereas the lipoyl prosthetic group is dispensable. This interaction requires colocalization in mitochondria. PPM1K competes with BCKDK for binding to DBT; this interaction is modulated by branched-chain alpha-keto acids (BCKAs). At steady state, BCKDH holoenzyme preferentially binds BCKDK and BCKDHA is phosphorylated. In response to high levels of BCKAs, BCKDK is replaced by PPM1K leading to BCKDHA dephosphorylation. Requires (R)-lipoate as cofactor.

It localises to the mitochondrion matrix. It carries out the reaction N(6)-[(R)-dihydrolipoyl]-L-lysyl-[protein] + 2-methylpropanoyl-CoA = N(6)-[(R)-S(8)-2-methylpropanoyldihydrolipoyl]-L-lysyl-[protein] + CoA. Its function is as follows. The branched-chain alpha-keto dehydrogenase complex catalyzes the overall conversion of alpha-keto acids to acyl-CoA and CO(2). It contains multiple copies of three enzymatic components: branched-chain alpha-keto acid decarboxylase (E1), lipoamide acyltransferase (E2) and lipoamide dehydrogenase (E3). Within this complex, the catalytic function of this enzyme is to accept, and to transfer to coenzyme A, acyl groups that are generated by the branched-chain alpha-keto acid decarboxylase component. The chain is Lipoamide acyltransferase component of branched-chain alpha-keto acid dehydrogenase complex, mitochondrial from Homo sapiens (Human).